The chain runs to 451 residues: Tubulin beta-1 chain (451 aa).

The short motif at 1–4 (MREI) is the MREI motif element. Positions 11, 69, 138, 142, 143, and 144 each coordinate GTP. Position 69 (glutamate 69) interacts with Mg(2+). Serine 172 is modified (phosphoserine; by CDK1). GTP-binding residues include asparagine 204 and asparagine 226. Residues 430–451 (AGLEDSEEDVEEAEVEAEDKDH) form a disordered region. Over residues 433–451 (EDSEEDVEEAEVEAEDKDH) the composition is skewed to acidic residues. At serine 435 the chain carries Phosphoserine. Position 440 is a 5-glutamyl polyglutamate (glutamate 440).

The protein belongs to the tubulin family. Dimer of alpha and beta chains. A typical microtubule is a hollow water-filled tube with an outer diameter of 25 nm and an inner diameter of 15 nM. Alpha-beta heterodimers associate head-to-tail to form protofilaments running lengthwise along the microtubule wall with the beta-tubulin subunit facing the microtubule plus end conferring a structural polarity. Microtubules usually have 13 protofilaments but different protofilament numbers can be found in some organisms and specialized cells. Interacts with RANBP10. The cofactor is Mg(2+). Some glutamate residues at the C-terminus are polyglycylated, resulting in polyglycine chains on the gamma-carboxyl group. Glycylation is mainly limited to tubulin incorporated into axonemes (cilia and flagella) whereas glutamylation is prevalent in neuronal cells, centrioles, axonemes, and the mitotic spindle. Both modifications can coexist on the same protein on adjacent residues, and lowering polyglycylation levels increases polyglutamylation, and reciprocally. Cilia and flagella glycylation is required for their stability and maintenance. Flagella glycylation controls sperm motility. In terms of processing, some glutamate residues at the C-terminus are polyglutamylated, resulting in polyglutamate chains on the gamma-carboxyl group. Polyglutamylation plays a key role in microtubule severing by spastin (SPAST). SPAST preferentially recognizes and acts on microtubules decorated with short polyglutamate tails: severing activity by SPAST increases as the number of glutamates per tubulin rises from one to eight, but decreases beyond this glutamylation threshold. Glutamylation is also involved in cilia motility. Post-translationally, phosphorylated on Ser-172 by CDK1 during the cell cycle, from metaphase to telophase, but not in interphase. This phosphorylation inhibits tubulin incorporation into microtubules.

Its subcellular location is the cytoplasm. The protein localises to the cytoskeleton. Its function is as follows. Tubulin is the major constituent of microtubules, a cylinder consisting of laterally associated linear protofilaments composed of alpha- and beta-tubulin heterodimers. Microtubules grow by the addition of GTP-tubulin dimers to the microtubule end, where a stabilizing cap forms. Below the cap, tubulin dimers are in GDP-bound state, owing to GTPase activity of alpha-tubulin. This is Tubulin beta-1 chain (Tubb1) from Mus musculus (Mouse).